An 856-amino-acid chain; its full sequence is cGMP-dependent protein kinase (856 aa).

The interval 1 to 33 is autoinhibitory segment; the sequence is MDDDEIIPKKNHPSNERNKKKAILSHEDFTGED. 4 cNMP-binding domain regions span residues 62–177, 180–279, 299–402, and 422–521; these read VCST…FIDS, VFDM…VVLG, IFKQ…LGNN, and IFRY…LQII. 3',5'-cyclic GMP-binding residues include Lys-117, Gly-126, Glu-127, Ala-129, Arg-136, and Ser-137. 3',5'-cyclic GMP is bound by residues Arg-477, Gly-486, Glu-487, Ala-489, Arg-496, and Thr-497. The Protein kinase domain maps to 545–802; the sequence is LLTERIIGRG…FKDIKENSFF (258 aa). ATP-binding positions include 551–559 and Lys-574; that span reads IGRGTFGIV. The active-site Proton acceptor is Asp-668. One can recognise an AGC-kinase C-terminal domain in the interval 803–856; it reads ADFDWDRLAGRLLEPPLISKSETYAEDIDVKQIEQEEEDNANTEIDDENWDIDF. The tract at residues 837-856 is disordered; the sequence is QEEEDNANTEIDDENWDIDF.

This sequence belongs to the protein kinase superfamily. AGC Ser/Thr protein kinase family. cGMP subfamily. In terms of assembly, monomer. Requires Mg(2+) as cofactor. Post-translationally, autophosphorylated.

It is found in the cytoplasm. It localises to the endoplasmic reticulum membrane. It carries out the reaction L-seryl-[protein] + ATP = O-phospho-L-seryl-[protein] + ADP + H(+). The catalysed reaction is L-threonyl-[protein] + ATP = O-phospho-L-threonyl-[protein] + ADP + H(+). With respect to regulation, activated by cGMP. Not activated by cAMP. cGMP binding allosterically triggers a conformational change at the alpha C-helix of cGMP-binding domain 4, which bridges the regulatory and catalytic domains, causing the capping triad, composed of Arg-488, Gln-536 and Asp-537, to form and stabilize the active conformation. The cGMP-binding domains acts cooperatively to activate PKG. In terms of biological role, serine/threonine protein kinase which acts as a downstream effector of the second messenger cGMP. Controls the release of Ca(2+) from intracellular stores by regulating phosphoinositide biosynthesis. Ca(2+) signals are essential for merozoite and sporozoite invasion and egress from host hepatocytes and erythrocytes, and, in the mosquito vector, for gametocyte activation, and ookinete and sporozoite motility. During the host liver stage, regulates the initial invasion of host hepatocytes by sporozoites by regulating sporozoite motility and microneme exocytosis. Following parasite development in the hepatocytes, required for the release of merosomes, a vesicle containing the mature merozoites. During the asexual blood stage, required for the progression from schizont to the ring stage following merozoite invasion of host erythrocytes and for merozoite egress. Regulates merozoite egress by promoting the release of exonemes and micronemes which contain proteins essential for egress. Phosphorylates CDPK1 predominantly at the late schizont stage; phosphorylation at 'Ser-64' regulates CDPK1 protein-protein interaction and phosphorylation at 'Thr-231' may regulate CDPK1 kinase activity. In the mosquito vector, required for the initiation of gametogenesis induced by xanthurenic acid, specifically the gametocyte differentiation from the crescent-shaped form to the spherical form. Required for the gliding motility of ookinetes to reach and penetrate the midgut epithelium by promoting Ca(2+)-mediated activation of CDPK1 and CDPK4. Also required for microneme secretion in ookinete by promoting Ca(2+)-mediated activation of CDPK3. The chain is cGMP-dependent protein kinase from Plasmodium berghei (strain Anka).